We begin with the raw amino-acid sequence, 146 residues long: Hemoglobin subunit beta-1/2 (146 aa).

An N-acetylvaline modification is found at valine 1. The Globin domain occupies 2 to 146; the sequence is HLTGEEKSGL…VANALAHKYH (145 aa). Phosphothreonine is present on threonine 12. Lysine 59 bears the N6-acetyllysine mark. Histidine 63 contacts heme b. An N6-acetyllysine modification is found at lysine 82. A heme b-binding site is contributed by histidine 92. Cysteine 93 is modified (S-nitrosocysteine). At lysine 144 the chain carries N6-acetyllysine.

It belongs to the globin family. Heterotetramer of two alpha chains and two beta chains. As to expression, red blood cells.

Its function is as follows. Involved in oxygen transport from the lung to the various peripheral tissues. In Physeter macrocephalus (Sperm whale), this protein is Hemoglobin subunit beta-1/2 (HBB).